The sequence spans 98 residues: MKTAIAERIEDKLYQNRYLVDAGRPHITVRPHRSPSLNLLALTRVCPAKCYELNETGQVEVTADGCMECGTCRVLCEANGDVEWSYPRGGFGVLFKFG.

Residues 57–87 (GQVEVTADGCMECGTCRVLCEANGDVEWSYP) form the 4Fe-4S ferredoxin-type domain.

This sequence to ferredoxins from P.putida and C.tartarivorum, ferredoxin I from A.vinelandii, ferredoxin II from D.desulfuricans.

Its function is as follows. Could be a 3Fe-4S cluster-containing protein. The polypeptide is Ferredoxin-like protein (fixX) (Rhizobium meliloti (strain 1021) (Ensifer meliloti)).